The primary structure comprises 39 residues: U-limacoditoxin(13)-As54 (39 aa).

The first 23 residues, 1–23 (MSKYIVLLVVSAIALLQFSMIEC), serve as a signal peptide directing secretion. Phe-37 is modified (phenylalanine amide).

The protein belongs to the FARP (FMRFamide related peptide) family. In terms of tissue distribution, expressed by the venom secretory cell of the spine. The spine is a cuticular structure containing a single large nucleated venom-secreting cell at its base. It is an independent unit capable of producing, storing and injecting venom. On the back of A.stimulea caterpillars, spines are grouped together by 50 to 100 to form scoli, of which there are eight.

It is found in the secreted. Functionally, strongly activates (at 30 uM) the human neuropeptide FF receptor 1 (NPFF1R), a G-protein coupled receptor, with an effect that is equipotent to the endogenous RFRP-1 ligand in activating NPFFR1. Is toxic when injected into Drosophila melanogaster. Also shows a moderate anthelmintic activity against the parasitic nematode H.contortus (drug susceptible Kirby isolate) (IC(50)=20.1 uM). In Acharia stimulea (Saddleback caterpillar moth), this protein is U-limacoditoxin(13)-As54.